The primary structure comprises 937 residues: AP-2 complex subunit beta (937 aa).

An N-acetylthreonine modification is found at T2. S4 carries the post-translational modification Phosphoserine. The residue at position 265 (K265) is an N6-acetyllysine. Phosphotyrosine occurs at positions 737 and 928.

It belongs to the adaptor complexes large subunit family. Adapter protein complex 2 (AP-2) is a heterotetramer composed of two large adaptins (alpha-type subunit AP2A1 or AP2A2 and beta-type subunit AP2B1), a medium adaptin (mu-type subunit AP2M1) and a small adaptin (sigma-type subunit AP2S1). Interacts with EPN1. Interacts with EPS15; clathrin competes with EPS15. Interacts with SNAP91; clathrin competes with SNAP91. Interacts with CLTC; clathrin competes with EPS15, SNAP91 and PIP5K1C. Interacts with LDLRAP1. Interacts with AMPH and BIN1. Interacts with ARF6 (GDP-bound). Interacts (dephosphorylated at Tyr-737) with ARRB1; phosphorylation of AP2B1 at Tyr-737 disrupts the interaction. Interacts with SLC2A8. Interacts with SCYL1 and SCYL2. Interacts with TGFBR1 and TGFBR2. Interacts with PIP5K1C; clathrin competes with PIP5K1C. Interacts with DENND1B. Interacts with FCHO1. Interacts with RFTN1. Interacts with KIAA1107. Together with AP2A1 or AP2A2 and AP2M1, it interacts with ADAM10; this interaction facilitates ADAM10 endocytosis from the plasma membrane during long-term potentiation in hippocampal neurons. The N-terminus is blocked. Post-translationally, phosphorylation at Tyr-737 by SRC occurs at the plasma membrane in clathrin-coated vesicles (CCVs).

It localises to the cell membrane. The protein localises to the membrane. The protein resides in the coated pit. In terms of biological role, component of the adaptor protein complex 2 (AP-2). Adaptor protein complexes function in protein transport via transport vesicles in different membrane traffic pathways. Adaptor protein complexes are vesicle coat components and appear to be involved in cargo selection and vesicle formation. AP-2 is involved in clathrin-dependent endocytosis in which cargo proteins are incorporated into vesicles surrounded by clathrin (clathrin-coated vesicles, CCVs) which are destined for fusion with the early endosome. The clathrin lattice serves as a mechanical scaffold but is itself unable to bind directly to membrane components. Clathrin-associated adaptor protein (AP) complexes which can bind directly to both the clathrin lattice and to the lipid and protein components of membranes are considered to be the major clathrin adaptors contributing the CCV formation. AP-2 also serves as a cargo receptor to selectively sort the membrane proteins involved in receptor-mediated endocytosis. AP-2 seems to play a role in the recycling of synaptic vesicle membranes from the presynaptic surface. AP-2 recognizes Y-X-X-[FILMV] (Y-X-X-Phi) and [ED]-X-X-X-L-[LI] endocytosis signal motifs within the cytosolic tails of transmembrane cargo molecules. AP-2 may also play a role in maintaining normal post-endocytic trafficking through the ARF6-regulated, non-clathrin pathway. During long-term potentiation in hippocampal neurons, AP-2 is responsible for the endocytosis of ADAM10. The AP-2 beta subunit acts via its C-terminal appendage domain as a scaffolding platform for endocytic accessory proteins; at least some clathrin-associated sorting proteins (CLASPs) are recognized by their [DE]-X(1,2)-F-X-X-[FL]-X-X-X-R motif. The AP-2 beta subunit binds to clathrin heavy chain, promoting clathrin lattice assembly; clathrin displaces at least some CLASPs from AP2B1 which probably then can be positioned for further coat assembly. The protein is AP-2 complex subunit beta (AP2B1) of Bos taurus (Bovine).